We begin with the raw amino-acid sequence, 725 residues long: MSASDLTSVQAGAPQGRRQILVTSALPYANGQIHIGHLVEYIQTDIWVRTMRMHGHEIYYIGADDTHGTPVMLRAEQEGVSPKQLIERVWREHKRDFDSFGVSFDNFYTTDSDENRVLSETIYLALKEAGFIAEREIEQAYDPVRQMFLPDRFIKGECPKCHAKDQYGDSCEVCGTTYQPTDLIHPYSVVSGAAPVRKTSTHYFFRLSDPRCEAFLREWVSGLAQPEATNKMREWLGEAGEAKLADWDISRDAPYFGFEIPGAPGKYFYVWLDAPVGYYASFKNLCQRRGLDFDAWIRKDSTTEQYHFIGKDILYFHTLFWPAMLEFSGHRTPTNVFAHGFLTVDGAKMSKSRGTFITAQSYIDTGLNPEWLRYYFAAKLNATMEDIDLNLEDFQARVNSDLVGKYVNIASRAAGFLLKRFDGRVQASAMNHPLLATLRGAIPQIAAHYEAREYGRALRQTMELADAVNGYVDSAKPWELAKDPANAVALHETCSVSLEAFRLLSLALKPVLPRVAQGVEAFLGIAPLTWADAGMPLSPEQPVRAYQHLMTRVDPKQIDALLAANRGSLQGTAAAAEAGAANGNGAGSKNGKGAKAAAQPAASAANADDGASPIISIDDFAKIDLRIAKIVACQAVEGSDKLLQLTLDVGEERTRNVFSGIKSAYRPEQLVGKLTVMVANLAPRKMKFGLSEGMVLAASAADEKAEPGLYILEPHSGAKPGMRVK.

The 'HIGH' region signature appears at 27–37 (PYANGQIHIGH). Positions 158, 161, 171, and 174 each coordinate Zn(2+). The 'KMSKS' region motif lies at 348–352 (KMSKS). Residue Lys-351 coordinates ATP. Residues 619-725 (DFAKIDLRIA…SGAKPGMRVK (107 aa)) enclose the tRNA-binding domain.

The protein belongs to the class-I aminoacyl-tRNA synthetase family. MetG type 1 subfamily. In terms of assembly, homodimer. Zn(2+) is required as a cofactor.

Its subcellular location is the cytoplasm. It catalyses the reaction tRNA(Met) + L-methionine + ATP = L-methionyl-tRNA(Met) + AMP + diphosphate. In terms of biological role, is required not only for elongation of protein synthesis but also for the initiation of all mRNA translation through initiator tRNA(fMet) aminoacylation. The protein is Methionine--tRNA ligase of Burkholderia pseudomallei (strain 1106a).